The sequence spans 204 residues: Thymidylate kinase (204 aa).

11-18 (GLDKSGKT) provides a ligand contact to ATP.

The protein belongs to the thymidylate kinase family.

The enzyme catalyses dTMP + ATP = dTDP + ADP. The protein operates within pyrimidine metabolism; dTTP biosynthesis. This is Thymidylate kinase (TMK) from Bos taurus (Bovine).